Here is a 390-residue protein sequence, read N- to C-terminus: 3,5-dihydroxyphenylacetyl-CoA synthase (390 aa).

Cys173 is an active-site residue.

Belongs to the thiolase-like superfamily. Chalcone/stilbene synthases family.

The catalysed reaction is 4 malonyl-CoA + 4 H(+) = (3,5-dihydroxyphenyl)acetyl-CoA + 4 CO2 + 3 CoA + H2O. The protein operates within antibiotic biosynthesis; vancomycin biosynthesis. Functionally, involved in the biosynthesis of the nonproteinogenic amino acid monomer (S)-3,5-dihydroxyphenylglycine (Dpg) responsible of the production of vancomycin and teicoplanin antibiotics. Catalyzes the Claisen condensation of four molecules of malonyl-CoA to yield 3,5-dihydroxyphenylacetyl-CoA (DPA-CoA) and three free coenzyme A (CoA). DpgA requires the presence of the dehydratases DpgB and DpgD to facilitate the aromatization of the DPA-S-DgpA or DPA-S-CoA intermediate. In Streptomyces toyocaensis, this protein is 3,5-dihydroxyphenylacetyl-CoA synthase.